Reading from the N-terminus, the 255-residue chain is MSVYTVKQMARLSGVSVRALHHYDAIGLLKPRAVGANGYRYYDRQDLLRLQQILFHRALETPLKDIQAALDQPGFDLAAALRAQRERLAAQAERYARLVDVVDRTLADLEGDETMDDKHLFEGFDPEKQARHEAWLVEHYGDEATRRIADAKAGMKSWGKKDWSQFQEEAKAIEHDLAKALTQGLPVDSAPVTAIMRRHWAWVGRSWNREPTPDAFAGLGHLYQANPEFTARYEAIAPGLTEYFSEAMRAFARGR.

The HTH merR-type domain occupies 3 to 72; the sequence is VYTVKQMARL…LKDIQAALDQ (70 aa). The H-T-H motif DNA-binding region spans 6 to 25; sequence VKQMARLSGVSVRALHHYDA.

Functionally, regulates the induction of katG (catalase-peroxidase) in stationary phase. This is HTH-type transcriptional regulator SkgA (skgA) from Caulobacter vibrioides (strain ATCC 19089 / CIP 103742 / CB 15) (Caulobacter crescentus).